Reading from the N-terminus, the 424-residue chain is Adenylosuccinate synthetase 2 (424 aa).

GTP-binding positions include 11 to 17 (GDEGKGK) and 39 to 41 (GHT). Residue aspartate 12 is the Proton acceptor of the active site. Mg(2+) contacts are provided by aspartate 12 and glycine 39. IMP-binding positions include 12-15 (DEGK), 37-40 (NAGH), threonine 127, arginine 141, glutamine 223, threonine 238, and arginine 302. Residue histidine 40 is the Proton donor of the active site. 298-304 (TTTGRGR) lines the substrate pocket. Residues arginine 304, 330–332 (KLD), and 412–414 (SVG) each bind GTP.

The protein belongs to the adenylosuccinate synthetase family. Homodimer. Mg(2+) serves as cofactor.

The protein localises to the cytoplasm. It catalyses the reaction IMP + L-aspartate + GTP = N(6)-(1,2-dicarboxyethyl)-AMP + GDP + phosphate + 2 H(+). The protein operates within purine metabolism; AMP biosynthesis via de novo pathway; AMP from IMP: step 1/2. Plays an important role in the de novo pathway of purine nucleotide biosynthesis. Catalyzes the first committed step in the biosynthesis of AMP from IMP. The sequence is that of Adenylosuccinate synthetase 2 from Methanosarcina acetivorans (strain ATCC 35395 / DSM 2834 / JCM 12185 / C2A).